The following is a 597-amino-acid chain: Blastula protease 10 (597 aa).

The N-terminal stretch at 1 to 16 (MKLILFLSGLVSLVLC) is a signal peptide. The propeptide at 17–93 (TLAAPTGDQK…DEMTGRKKRK (77 aa)) is activation peptide. The segment at 24–67 (DQKEIHTETPPPKKPSETTTPGALKTPQPEPKDEEPTPGAFQGD) is disordered. The Peptidase M12A domain maps to 93-294 (KATIYESQRW…ELANLIYECD (202 aa)). 9 disulfide bridges follow: cysteine 134-cysteine 293, cysteine 162-cysteine 182, cysteine 299-cysteine 315, cysteine 305-cysteine 317, cysteine 319-cysteine 328, cysteine 339-cysteine 365, cysteine 392-cysteine 412, cysteine 484-cysteine 510, and cysteine 537-cysteine 557. Histidine 190 is a binding site for Zn(2+). Glutamate 191 is an active-site residue. Zn(2+)-binding residues include histidine 194 and histidine 200. One can recognise an EGF-like domain in the interval 295-329 (DIEDCAGANECLNGGYHDTECNCVCPSGYNGDLCE). CUB domains are found at residues 339-449 (CSER…YRIV) and 484-595 (CGGS…YRAI).

Zn(2+) serves as cofactor.

It is found in the cytoplasm. Its subcellular location is the perinuclear region. The protein resides in the cell cortex. The protein localises to the secreted. It localises to the extracellular space. Could be involved in the differentiation of ectodermal lineages and subsequent patterning of the embryo. This Paracentrotus lividus (Common sea urchin) protein is Blastula protease 10 (BP10).